The following is a 160-amino-acid chain: CXXC motif containing zinc binding protein (160 aa).

Positions 33, 36, 67, and 70 each coordinate Zn(2+).

The protein belongs to the UPF0587 family.

The sequence is that of CXXC motif containing zinc binding protein (czib) from Xenopus laevis (African clawed frog).